The sequence spans 405 residues: Elongation factor Tu (405 aa).

In terms of domain architecture, tr-type G spans 10–215; the sequence is KPHVNIGTIG…AVDSYIPTPE (206 aa). A G1 region spans residues 19-26; that stretch reads GHVDHGKT. 19 to 26 contacts GTP; it reads GHVDHGKT. Thr26 contacts Mg(2+). Positions 61 to 65 are G2; it reads GITIN. The G3 stretch occupies residues 82–85; sequence DCPG. GTP is bound by residues 82–86 and 137–140; these read DCPGH and NKVD. A G4 region spans residues 137-140; that stretch reads NKVD. A G5 region spans residues 175–177; sequence SAL.

This sequence belongs to the TRAFAC class translation factor GTPase superfamily. Classic translation factor GTPase family. EF-Tu/EF-1A subfamily. As to quaternary structure, monomer.

Its subcellular location is the cytoplasm. The catalysed reaction is GTP + H2O = GDP + phosphate + H(+). GTP hydrolase that promotes the GTP-dependent binding of aminoacyl-tRNA to the A-site of ribosomes during protein biosynthesis. The protein is Elongation factor Tu of Deinococcus radiodurans (strain ATCC 13939 / DSM 20539 / JCM 16871 / CCUG 27074 / LMG 4051 / NBRC 15346 / NCIMB 9279 / VKM B-1422 / R1).